Here is a 101-residue protein sequence, read N- to C-terminus: ATP-dependent Clp protease adapter protein ClpS (101 aa).

This sequence belongs to the ClpS family. Binds to the N-terminal domain of the chaperone ClpA.

Its function is as follows. Involved in the modulation of the specificity of the ClpAP-mediated ATP-dependent protein degradation. This chain is ATP-dependent Clp protease adapter protein ClpS, found in Mycobacterium bovis (strain ATCC BAA-935 / AF2122/97).